Here is a 382-residue protein sequence, read N- to C-terminus: Anhydro-N-acetylmuramic acid kinase (382 aa).

9–16 (GTSLDGID) lines the ATP pocket.

It belongs to the anhydro-N-acetylmuramic acid kinase family.

It catalyses the reaction 1,6-anhydro-N-acetyl-beta-muramate + ATP + H2O = N-acetyl-D-muramate 6-phosphate + ADP + H(+). It participates in amino-sugar metabolism; 1,6-anhydro-N-acetylmuramate degradation. Its pathway is cell wall biogenesis; peptidoglycan recycling. Functionally, catalyzes the specific phosphorylation of 1,6-anhydro-N-acetylmuramic acid (anhMurNAc) with the simultaneous cleavage of the 1,6-anhydro ring, generating MurNAc-6-P. Is required for the utilization of anhMurNAc either imported from the medium or derived from its own cell wall murein, and thus plays a role in cell wall recycling. The protein is Anhydro-N-acetylmuramic acid kinase of Bacillus cereus (strain 03BB102).